A 548-amino-acid chain; its full sequence is (S)-beta-macrocarpene synthase (548 aa).

2 residues coordinate Mg(2+): Asp-302 and Asp-306. Substrate-binding residues include Asp-302, Asp-306, Arg-443, and Asn-446. Positions 302-306 match the DDXXD motif motif; that stretch reads DDTLD. Mg(2+) is bound by residues Asn-446, Ser-450, and Glu-454.

Belongs to the terpene synthase family. In terms of assembly, monomer. Mg(2+) serves as cofactor. Requires Mn(2+) as cofactor. Expressed in roots. Not detected in leaves, unless damaged by herbivory or infected by fungi.

The protein resides in the cytoplasm. It catalyses the reaction (S)-beta-bisabolene = (S)-beta-macrocarpene. The enzyme catalyses (2E,6E)-farnesyl diphosphate = (S)-beta-bisabolene + diphosphate. The catalysed reaction is (2E)-geranyl diphosphate = (4S)-limonene + diphosphate. It carries out the reaction (2E)-geranyl diphosphate = beta-myrcene + diphosphate. It catalyses the reaction (2E)-geranyl diphosphate = terpinolene + diphosphate. The enzyme catalyses (2E)-geranyl diphosphate + H2O = (S)-linalool + diphosphate. Its pathway is secondary metabolite biosynthesis; terpenoid biosynthesis. In terms of biological role, involved in the biosynthesis of the bicyclic sesquiterpene (S)-beta-macrocarpene. Can use both geranyl diphosphate and farnesyl diphosphate as substrate, but not geranylgeranyl diphosphate. Produces mainly (S)-beta-macrocarpene, but also smaller amounts of beta-bisabolene and (E)-beta-farnesene when used with farnesyl diphosphate as substrate. In the presence of geranyl diphosphate, produces the acyclic monoterpenes beta-myrcene and linalool along with minor amounts of the cyclic compounds limonene, alpha-thujene, sabinene and alpha-terpinolene. May be involved in plant defense. The sequence is that of (S)-beta-macrocarpene synthase from Zea mays (Maize).